The chain runs to 79 residues: Sec-independent protein translocase protein TatA (79 aa).

A helical membrane pass occupies residues 1–21 (MGSLSIWHWIVVIAVVLLLFG). Residues 43–60 (LQDDEKTAEKPDPVKSID) are compositionally biased toward basic and acidic residues. Residues 43–79 (LQDDEKTAEKPDPVKSIDHNAPTAAAPTRTDVGSKAV) are disordered.

It belongs to the TatA/E family. As to quaternary structure, the Tat system comprises two distinct complexes: a TatABC complex, containing multiple copies of TatA, TatB and TatC subunits, and a separate TatA complex, containing only TatA subunits. Substrates initially bind to the TatABC complex, which probably triggers association of the separate TatA complex to form the active translocon.

It is found in the cell inner membrane. Part of the twin-arginine translocation (Tat) system that transports large folded proteins containing a characteristic twin-arginine motif in their signal peptide across membranes. TatA could form the protein-conducting channel of the Tat system. This is Sec-independent protein translocase protein TatA from Rhodopseudomonas palustris (strain BisB5).